A 127-amino-acid chain; its full sequence is Putative membrane protein insertion efficiency factor (127 aa).

The tract at residues aspartate 71–glutamate 106 is disordered. Over residues arginine 88 to threonine 98 the composition is skewed to basic and acidic residues.

This sequence belongs to the UPF0161 family.

It is found in the cell inner membrane. Functionally, could be involved in insertion of integral membrane proteins into the membrane. The protein is Putative membrane protein insertion efficiency factor of Sorangium cellulosum (strain So ce56) (Polyangium cellulosum (strain So ce56)).